A 331-amino-acid chain; its full sequence is Ketol-acid reductoisomerase (NADP(+)) (331 aa).

A KARI N-terminal Rossmann domain is found at 2 to 182 (ARLYYDADAN…GGTRAGILET (181 aa)). NADP(+) contacts are provided by residues 25–28 (YGSQ), serine 51, serine 53, and 83–86 (DEVQ). Histidine 108 is a catalytic residue. NADP(+) is bound at residue glycine 134. One can recognise a KARI C-terminal knotted domain in the interval 183–328 (TFREETETDL…KDLRAMFSWT (146 aa)). The Mg(2+) site is built by aspartate 191, glutamate 195, glutamate 227, and glutamate 231. Position 252 (serine 252) interacts with substrate.

This sequence belongs to the ketol-acid reductoisomerase family. Requires Mg(2+) as cofactor.

The enzyme catalyses (2R)-2,3-dihydroxy-3-methylbutanoate + NADP(+) = (2S)-2-acetolactate + NADPH + H(+). It carries out the reaction (2R,3R)-2,3-dihydroxy-3-methylpentanoate + NADP(+) = (S)-2-ethyl-2-hydroxy-3-oxobutanoate + NADPH + H(+). It functions in the pathway amino-acid biosynthesis; L-isoleucine biosynthesis; L-isoleucine from 2-oxobutanoate: step 2/4. The protein operates within amino-acid biosynthesis; L-valine biosynthesis; L-valine from pyruvate: step 2/4. In terms of biological role, involved in the biosynthesis of branched-chain amino acids (BCAA). Catalyzes an alkyl-migration followed by a ketol-acid reduction of (S)-2-acetolactate (S2AL) to yield (R)-2,3-dihydroxy-isovalerate. In the isomerase reaction, S2AL is rearranged via a Mg-dependent methyl migration to produce 3-hydroxy-3-methyl-2-ketobutyrate (HMKB). In the reductase reaction, this 2-ketoacid undergoes a metal-dependent reduction by NADPH to yield (R)-2,3-dihydroxy-isovalerate. This chain is Ketol-acid reductoisomerase (NADP(+)), found in Acaryochloris marina (strain MBIC 11017).